Consider the following 386-residue polypeptide: Magnesium transporter MRS2-7 (386 aa).

Helical transmembrane passes span 321 to 341 (LMLSAGTVCVSVYSMIAGIFG) and 355 to 375 (IFKWVVSLTGTFCIVLFVIIL). The short motif at 341-343 (GMN) is the Required for magnesium transport activity element.

It belongs to the CorA metal ion transporter (MIT) (TC 1.A.35.5) family. Isoform 1 is expressed in the whole plant. Isoform 4 is expressed only in roots and flowers.

The protein localises to the endoplasmic reticulum membrane. Functionally, low-affinity magnesium transporter that mediates the influx of magnesium. The chain is Magnesium transporter MRS2-7 (MRS2-7) from Arabidopsis thaliana (Mouse-ear cress).